Here is a 121-residue protein sequence, read N- to C-terminus: Large ribosomal subunit protein uL18c (121 aa).

The protein belongs to the universal ribosomal protein uL18 family. As to quaternary structure, part of the 50S ribosomal subunit; contacts the 5S rRNA.

Its subcellular location is the plastid. It localises to the cyanelle. Its function is as follows. Binds 5S rRNA, forms part of the central protuberance of the 50S subunit. The sequence is that of Large ribosomal subunit protein uL18c (rpl18) from Cyanophora paradoxa.